A 599-amino-acid chain; its full sequence is Adenine deaminase (599 aa).

The interval 1–31 (MARSNRRGGRGDPEDDPAWAPPGHRCAGERA) is disordered.

It belongs to the metallo-dependent hydrolases superfamily. Adenine deaminase family. It depends on Mn(2+) as a cofactor.

It carries out the reaction adenine + H2O + H(+) = hypoxanthine + NH4(+). The protein is Adenine deaminase of Methanopyrus kandleri (strain AV19 / DSM 6324 / JCM 9639 / NBRC 100938).